Consider the following 432-residue polypeptide: MTLAAMTAAASQLDNAAPDDVEITDSSAAAEYIADGCLVDGPLGRVGLEMEAHCFDPADPFRRPSWEEITEVLEWLSPLPGGSVVSVEPGGAVELSGPPADGVLAAIGAMTRDQAVLRSALANAGLGLVFLGADPLRSPVRVNPGARYRAMEQFFAASHSGVPGAAMMTSTAAIQVNLDAGPQEGWAERVRLAHALGPTMIAIAANSPMLGGRFSGWQSTRQRVWGQMDSARCGPILGASGDHPGIDWAKYALKAPVMMVRSPDTQDTRAVTDYVPFTDWVDGRVLLDGRRATVADLVYHLTTLFPPVRPRQWLEIRYLDSVPDEVWPAVVFTLVTLLDDPVAADLAVDAVEPVATAWDTAARIGLADRRLYLAANRCLAIAARRVPTELIGAMQRLVDHVDRGVCPADDFSDRVIAGGIASAVTGMMHGAS.

Belongs to the glutamate--cysteine ligase type 2 family. EgtA subfamily.

The enzyme catalyses L-cysteine + L-glutamate + ATP = gamma-L-glutamyl-L-cysteine + ADP + phosphate + H(+). Its pathway is amino-acid biosynthesis; ergothioneine biosynthesis. Catalyzes the synthesis of gamma-glutamylcysteine (gamma-GC) which is used as substrate for the biosynthesis of the low-molecular thiol compound ergothioneine (ERG). ERG is one of the major redox buffers which protects bacteria against redox stressors and antibiotics; loss of ERG or mycothiol (MSH, the other major redox buffer in this bacteria) leads to respiratory alterations and bioenergetic deficiencies that negatively impact virulence. The sequence is that of Glutamate--cysteine ligase EgtA (egtA) from Mycobacterium tuberculosis (strain CDC 1551 / Oshkosh).